Here is a 74-residue protein sequence, read N- to C-terminus: Toxin Td6 (74 aa).

The N-terminal stretch at 1–8 is a signal peptide; it reads IGMIVECE. The LCN-type CS-alpha/beta domain maps to 9-71; it reads KEGYLMEANG…IWDSATNTCG (63 aa). 4 disulfides stabilise this stretch: Cys19–Cys70, Cys23–Cys45, Cys31–Cys51, and Cys35–Cys53. Arginine amide is present on Arg72.

The protein belongs to the long (4 C-C) scorpion toxin superfamily. Sodium channel inhibitor family. Beta subfamily. As to expression, expressed by the venom gland.

Its subcellular location is the secreted. Beta toxins bind voltage-independently at site-4 of sodium channels (Nav) and shift the voltage of activation toward more negative potentials thereby affecting sodium channel activation and promoting spontaneous and repetitive firing. The protein is Toxin Td6 of Tityus discrepans (Venezuelan scorpion).